Reading from the N-terminus, the 319-residue chain is 1-aminocyclopropane-1-carboxylate oxidase (319 aa).

One can recognise a Fe2OG dioxygenase domain in the interval 153 to 253; it reads PTFGTKVSNY…RMSIASFYNP (101 aa). Residues histidine 177, aspartate 179, and histidine 234 each contribute to the Fe cation site.

This sequence belongs to the iron/ascorbate-dependent oxidoreductase family. Fe cation is required as a cofactor.

It carries out the reaction 1-aminocyclopropane-1-carboxylate + L-ascorbate + O2 = ethene + L-dehydroascorbate + hydrogen cyanide + CO2 + 2 H2O. It functions in the pathway alkene biosynthesis; ethylene biosynthesis via S-adenosyl-L-methionine; ethylene from S-adenosyl-L-methionine: step 2/2. The protein is 1-aminocyclopropane-1-carboxylate oxidase (ACO) of Actinidia deliciosa (Kiwi).